Reading from the N-terminus, the 106-residue chain is MNKRAKSKNREPLRKSPVKRGDEVVVITGSERGKRGKVLKVLRNTHKVIVEGIKMVKKAVRPSQDNPKGGIVEKEATIAISNVMLASKWEKRQEKKKVAVEKKEQG.

Residues 1–20 are disordered; that stretch reads MNKRAKSKNREPLRKSPVKR. The span at 8 to 20 shows a compositional bias: basic and acidic residues; it reads KNREPLRKSPVKR.

Belongs to the universal ribosomal protein uL24 family. In terms of assembly, part of the 50S ribosomal subunit.

Its function is as follows. One of two assembly initiator proteins, it binds directly to the 5'-end of the 23S rRNA, where it nucleates assembly of the 50S subunit. One of the proteins that surrounds the polypeptide exit tunnel on the outside of the subunit. The polypeptide is Large ribosomal subunit protein uL24 (Methylacidiphilum infernorum (isolate V4) (Methylokorus infernorum (strain V4))).